The sequence spans 185 residues: HTH-type transcriptional regulator SA2364 (185 aa).

The region spanning 6–66 (KENRQRIEEI…YVIQRDLDIF (61 aa)) is the HTH tetR-type domain. Positions 29–48 (SMNRIAKELGIGMGTLYRHF) form a DNA-binding region, H-T-H motif.

In Staphylococcus aureus (strain N315), this protein is HTH-type transcriptional regulator SA2364.